Reading from the N-terminus, the 466-residue chain is Phytase A (466 aa).

The signal sequence occupies residues 1–19 (MAVLSVLLPITFLLSSVTG). Cys30 and Cys39 are oxidised to a cystine. 1D-myo-inositol hexakisphosphate contacts are provided by Gln49, Tyr50, Arg80, His81, Arg84, and Thr87. 4 cysteine pairs are disulfide-bonded: Cys70/Cys413, Cys214/Cys464, Cys263/Cys281, and Cys435/Cys443. The Nucleophile role is filled by His81. Asn104 and Asn119 each carry an N-linked (GlcNAc...) asparagine glycan. Arg164 is a 1D-myo-inositol hexakisphosphate binding site. Asn206 and Asn219 each carry an N-linked (GlcNAc...) asparagine glycan. Position 300 (Lys300) interacts with 1D-myo-inositol hexakisphosphate. Asn338 and Asn351 each carry an N-linked (GlcNAc...) asparagine glycan. Positions 360 and 361 each coordinate 1D-myo-inositol hexakisphosphate. Asn375 is a glycosylation site (N-linked (GlcNAc...) asparagine).

It belongs to the histidine acid phosphatase family. As to quaternary structure, monomer.

The protein localises to the secreted. It carries out the reaction 1D-myo-inositol hexakisphosphate + H2O = 1D-myo-inositol 1,2,4,5,6-pentakisphosphate + phosphate. The catalysed reaction is 1D-myo-inositol 1,2,4,5,6-pentakisphosphate + H2O = 1D-myo-inositol 1,2,5,6-tetrakisphosphate + phosphate. The enzyme catalyses 1D-myo-inositol 1,2,5,6-tetrakisphosphate + H2O = 1D-myo-inositol 1,2,6-trisphosphate + phosphate. It catalyses the reaction 1D-myo-inositol 1,2,6-trisphosphate + H2O = 1D-myo-inositol 1,2-bisphosphate + phosphate. It carries out the reaction 1D-myo-inositol 1,2-bisphosphate + H2O = 1D-myo-inositol 2-phosphate + phosphate. Its function is as follows. Catalyzes the phosphate monoester hydrolysis of phytic acid (myo-inositol hexakisphosphate), which results in the stepwise formation of myo-inositol pentakis-, tetrakis-, tris-, bis-, and monophosphates, as well as the liberation of inorganic phosphate. Myo-inositol 2-monophosphate is the end product. The chain is Phytase A (phyA) from Aspergillus oryzae (strain ATCC 42149 / RIB 40) (Yellow koji mold).